Consider the following 103-residue polypeptide: Large ribosomal subunit protein bL21 (103 aa).

It belongs to the bacterial ribosomal protein bL21 family. As to quaternary structure, part of the 50S ribosomal subunit. Contacts protein L20.

Functionally, this protein binds to 23S rRNA in the presence of protein L20. The sequence is that of Large ribosomal subunit protein bL21 from Lactobacillus acidophilus (strain ATCC 700396 / NCK56 / N2 / NCFM).